Reading from the N-terminus, the 344-residue chain is GTP 3',8-cyclase (344 aa).

The region spanning 19–245 (PFGRAVTYLR…DIPYRTGGPA (227 aa)) is the Radical SAM core domain. Arginine 28 contributes to the GTP binding site. [4Fe-4S] cluster-binding residues include cysteine 35 and cysteine 39. Tyrosine 41 serves as a coordination point for S-adenosyl-L-methionine. Position 42 (cysteine 42) interacts with [4Fe-4S] cluster. Arginine 77 contributes to the GTP binding site. An S-adenosyl-L-methionine-binding site is contributed by glycine 81. Threonine 111 lines the GTP pocket. Serine 135 is an S-adenosyl-L-methionine binding site. Lysine 171 contributes to the GTP binding site. Residue methionine 205 coordinates S-adenosyl-L-methionine. 2 residues coordinate [4Fe-4S] cluster: cysteine 268 and cysteine 271. 273–275 (RVR) is a GTP binding site. Cysteine 285 is a binding site for [4Fe-4S] cluster.

This sequence belongs to the radical SAM superfamily. MoaA family. In terms of assembly, monomer and homodimer. [4Fe-4S] cluster serves as cofactor.

The catalysed reaction is GTP + AH2 + S-adenosyl-L-methionine = (8S)-3',8-cyclo-7,8-dihydroguanosine 5'-triphosphate + 5'-deoxyadenosine + L-methionine + A + H(+). It functions in the pathway cofactor biosynthesis; molybdopterin biosynthesis. In terms of biological role, catalyzes the cyclization of GTP to (8S)-3',8-cyclo-7,8-dihydroguanosine 5'-triphosphate. The polypeptide is GTP 3',8-cyclase (Brucella melitensis biotype 2 (strain ATCC 23457)).